Here is a 240-residue protein sequence, read N- to C-terminus: UDP-2,3-diacylglucosamine hydrolase (240 aa).

Residues Asp-8, His-10, Asp-41, Asn-79, and His-114 each coordinate Mn(2+). 79-80 provides a ligand contact to substrate; it reads NR. The substrate site is built by Asp-122, Ser-160, Asn-164, Lys-167, and His-195. Mn(2+)-binding residues include His-195 and His-197.

Belongs to the LpxH family. Mn(2+) serves as cofactor.

It is found in the cell inner membrane. The enzyme catalyses UDP-2-N,3-O-bis[(3R)-3-hydroxytetradecanoyl]-alpha-D-glucosamine + H2O = 2-N,3-O-bis[(3R)-3-hydroxytetradecanoyl]-alpha-D-glucosaminyl 1-phosphate + UMP + 2 H(+). It participates in glycolipid biosynthesis; lipid IV(A) biosynthesis; lipid IV(A) from (3R)-3-hydroxytetradecanoyl-[acyl-carrier-protein] and UDP-N-acetyl-alpha-D-glucosamine: step 4/6. In terms of biological role, hydrolyzes the pyrophosphate bond of UDP-2,3-diacylglucosamine to yield 2,3-diacylglucosamine 1-phosphate (lipid X) and UMP by catalyzing the attack of water at the alpha-P atom. Involved in the biosynthesis of lipid A, a phosphorylated glycolipid that anchors the lipopolysaccharide to the outer membrane of the cell. The sequence is that of UDP-2,3-diacylglucosamine hydrolase from Salmonella schwarzengrund (strain CVM19633).